Reading from the N-terminus, the 312-residue chain is uncharacterized protein (312 aa).

Topologically, residues 1-14 (MSIVETCISFVSTN) are extracellular. A helical transmembrane segment spans residues 15 to 35 (PFYPFCTGLLLNCVVTPLYFW). Residues 36–41 (KTQNGR) lie on the Cytoplasmic side of the membrane. The helical transmembrane segment at 42–62 (IVVVSLLQFVVLYATAFISIG) threads the bilayer. Residues 63–179 (TDKSLYRNKW…LEYDQDTATE (117 aa)) lie on the Extracellular side of the membrane. The region spanning 70–173 (NKWVALPLSK…KGPLGELEYD (104 aa)) is the FAD-binding FR-type domain. Residues 180–200 (LGIIAGGSGITPVLQVLQEII) form a helical membrane-spanning segment. The Cytoplasmic segment spans residues 201 to 312 (PSPEDLTHIS…GNGTDKVFVF (112 aa)).

Belongs to the flavoprotein pyridine nucleotide cytochrome reductase family. It depends on FAD as a cofactor.

The protein localises to the membrane. This is an uncharacterized protein from Saccharomyces cerevisiae (strain ATCC 204508 / S288c) (Baker's yeast).